Consider the following 365-residue polypeptide: DNA replication and repair protein RecF (365 aa).

30–37 (GRNAQGKT) serves as a coordination point for ATP.

Belongs to the RecF family.

The protein resides in the cytoplasm. Its function is as follows. The RecF protein is involved in DNA metabolism; it is required for DNA replication and normal SOS inducibility. RecF binds preferentially to single-stranded, linear DNA. It also seems to bind ATP. The protein is DNA replication and repair protein RecF of Streptococcus pneumoniae serotype 4 (strain ATCC BAA-334 / TIGR4).